Reading from the N-terminus, the 154-residue chain is 6,7-dimethyl-8-ribityllumazine synthase (154 aa).

Residues Phe22, 56–58 (AFE), and 80–82 (TVI) each bind 5-amino-6-(D-ribitylamino)uracil. 85–86 (AT) contributes to the (2S)-2-hydroxy-3-oxobutyl phosphate binding site. The active-site Proton donor is the His88. Residue Phe113 coordinates 5-amino-6-(D-ribitylamino)uracil. Arg127 is a binding site for (2S)-2-hydroxy-3-oxobutyl phosphate.

The protein belongs to the DMRL synthase family. As to quaternary structure, forms an icosahedral capsid composed of 60 subunits, arranged as a dodecamer of pentamers.

It carries out the reaction (2S)-2-hydroxy-3-oxobutyl phosphate + 5-amino-6-(D-ribitylamino)uracil = 6,7-dimethyl-8-(1-D-ribityl)lumazine + phosphate + 2 H2O + H(+). It functions in the pathway cofactor biosynthesis; riboflavin biosynthesis; riboflavin from 2-hydroxy-3-oxobutyl phosphate and 5-amino-6-(D-ribitylamino)uracil: step 1/2. Functionally, catalyzes the formation of 6,7-dimethyl-8-ribityllumazine by condensation of 5-amino-6-(D-ribitylamino)uracil with 3,4-dihydroxy-2-butanone 4-phosphate. This is the penultimate step in the biosynthesis of riboflavin. This Bacillus licheniformis (strain ATCC 14580 / DSM 13 / JCM 2505 / CCUG 7422 / NBRC 12200 / NCIMB 9375 / NCTC 10341 / NRRL NRS-1264 / Gibson 46) protein is 6,7-dimethyl-8-ribityllumazine synthase.